Reading from the N-terminus, the 275-residue chain is Ribosomal RNA small subunit methyltransferase A (275 aa).

S-adenosyl-L-methionine contacts are provided by asparagine 21, leucine 23, glycine 48, glutamate 69, aspartate 94, and asparagine 115.

The protein belongs to the class I-like SAM-binding methyltransferase superfamily. rRNA adenine N(6)-methyltransferase family. RsmA subfamily.

Its subcellular location is the cytoplasm. The catalysed reaction is adenosine(1518)/adenosine(1519) in 16S rRNA + 4 S-adenosyl-L-methionine = N(6)-dimethyladenosine(1518)/N(6)-dimethyladenosine(1519) in 16S rRNA + 4 S-adenosyl-L-homocysteine + 4 H(+). Functionally, specifically dimethylates two adjacent adenosines (A1518 and A1519) in the loop of a conserved hairpin near the 3'-end of 16S rRNA in the 30S particle. May play a critical role in biogenesis of 30S subunits. In Clostridium botulinum (strain Okra / Type B1), this protein is Ribosomal RNA small subunit methyltransferase A.